A 466-amino-acid chain; its full sequence is Cysteine--tRNA ligase (466 aa).

C27 provides a ligand contact to Zn(2+). Positions 29-39 (PTVYNYFHIGN) match the 'HIGH' region motif. Zn(2+)-binding residues include C207, H232, and E236. Residues 264 to 268 (KMSKS) carry the 'KMSKS' region motif. K267 is a binding site for ATP.

It belongs to the class-I aminoacyl-tRNA synthetase family. In terms of assembly, monomer. The cofactor is Zn(2+).

It is found in the cytoplasm. It carries out the reaction tRNA(Cys) + L-cysteine + ATP = L-cysteinyl-tRNA(Cys) + AMP + diphosphate. The polypeptide is Cysteine--tRNA ligase (Clostridium novyi (strain NT)).